A 376-amino-acid polypeptide reads, in one-letter code: Integrator complex assembly factor WDR73 (376 aa).

3 WD repeats span residues 84–123, 276–316, and 337–376; these read FSEE…SDVI, ASKN…TESS, and TSPA…ITDR. The segment at 316 to 336 is disordered; that stretch reads SSPQPIFSHRGHEMSQEAKSS.

Belongs to the WD repeat WDR73 family.

It localises to the cytoplasm. It is found in the cytoskeleton. Its subcellular location is the spindle. The protein localises to the spindle pole. The protein resides in the cleavage furrow. Its function is as follows. Component of a multiprotein complex required for the assembly of the RNA endonuclease module of the integrator complex. Associates with ints9 and ints11 in the cytoplasm, stabilizing the ints9-ints11 heterodimer and blocking the active site of ints11. Brat1 then joins the complex and plugs the active site of ints11, leading to wdr73 release and nuclear import of ints9 and ints11. The sequence is that of Integrator complex assembly factor WDR73 (wdr73) from Danio rerio (Zebrafish).